The primary structure comprises 270 residues: Tetraspanin-2 (270 aa).

Residues 1–8 are Cytoplasmic-facing; sequence MALANNLT. A helical transmembrane segment spans residues 9 to 29; it reads AILNLLALLCSIPITASGIWL. The Extracellular portion of the chain corresponds to 30–42; that stretch reads ASKPDNECVNLLR. Residues 43-63 form a helical membrane-spanning segment; it reads WPVVVLGVLILVVSATGFIGA. The Cytoplasmic portion of the chain corresponds to 64–74; the sequence is YKYKETLLAVY. The chain crosses the membrane as a helical span at residues 75–95; sequence LCCMAILIGLLLVVLIFAFVV. At 96 to 232 the chain is on the extracellular side; that stretch reads TRPDGSYRVP…NLRKEWRKAN (137 aa). Residues 233-253 form a helical membrane-spanning segment; sequence LILIITVVVLIWVYVIACSAF. Over 254-270 the chain is Cytoplasmic; the sequence is RNAQTEDLFRKYKQGWV.

Belongs to the tetraspanin (TM4SF) family.

Its subcellular location is the membrane. Functionally, may be involved in the regulation of cell differentiation. In Arabidopsis thaliana (Mouse-ear cress), this protein is Tetraspanin-2 (TET2).